The sequence spans 218 residues: uncharacterized protein (218 aa).

The signal sequence occupies residues 1-17 (MLKKIIILFLGIFLLSS). The N-palmitoyl cysteine moiety is linked to residue Cys18. A lipid anchor (S-diacylglycerol cysteine) is attached at Cys18. Residues 136–164 (YKEKKIEEELNQIKAMLKETKRDITKYTC) are a coiled coil.

It localises to the cell membrane. This is an uncharacterized protein from Rickettsia typhi (strain ATCC VR-144 / Wilmington).